A 298-amino-acid chain; its full sequence is Probable 2-(5''-triphosphoribosyl)-3'-dephosphocoenzyme-A synthase 2 (298 aa).

This sequence belongs to the CitG/MdcB family.

It catalyses the reaction 3'-dephospho-CoA + ATP = 2'-(5''-triphospho-alpha-D-ribosyl)-3'-dephospho-CoA + adenine. The polypeptide is Probable 2-(5''-triphosphoribosyl)-3'-dephosphocoenzyme-A synthase 2 (Salmonella choleraesuis (strain SC-B67)).